We begin with the raw amino-acid sequence, 674 residues long: tRNA-guanine(15) transglycosylase (674 aa).

Catalysis depends on Asp-90, which acts as the Nucleophile. Substrate is bound by residues Asp-125 and Ala-192. 3 residues coordinate Zn(2+): Cys-275, Cys-277, and Cys-280. The PUA domain occupies 596 to 671 (HNRVVVSEDS…QAIKTRKWKK (76 aa)).

It belongs to the archaeosine tRNA-ribosyltransferase family. Zn(2+) is required as a cofactor.

The catalysed reaction is guanosine(15) in tRNA + 7-cyano-7-deazaguanine = 7-cyano-7-carbaguanosine(15) in tRNA + guanine. Its pathway is tRNA modification; archaeosine-tRNA biosynthesis. Exchanges the guanine residue with 7-cyano-7-deazaguanine (preQ0) at position 15 in the dihydrouridine loop (D-loop) of archaeal tRNAs. The chain is tRNA-guanine(15) transglycosylase from Methanosphaera stadtmanae (strain ATCC 43021 / DSM 3091 / JCM 11832 / MCB-3).